An 88-amino-acid chain; its full sequence is Small ribosomal subunit protein bS20 (88 aa).

The segment at 1-27 (MANIPSAKKRARQAEKRRKHNQSQRSM) is disordered. The segment covering 7–22 (AKKRARQAEKRRKHNQ) has biased composition (basic residues).

Belongs to the bacterial ribosomal protein bS20 family.

In terms of biological role, binds directly to 16S ribosomal RNA. This chain is Small ribosomal subunit protein bS20, found in Alkalilimnicola ehrlichii (strain ATCC BAA-1101 / DSM 17681 / MLHE-1).